The chain runs to 776 residues: Palmitoyltransferase AKR1 (776 aa).

Residues 1 to 311 (MDQEMTTVAS…MEGKLGPRNT (311 aa)) lie on the Cytoplasmic side of the membrane. Residues 38–58 (RLDEGSSIRGGELERDSQEVG) form a disordered region. ANK repeat units lie at residues 68–97 (CHDL…SLNL), 103–132 (QDVT…DIDA), 137–166 (LKAT…DPNI), 170–199 (QGFN…AIDE), 203–232 (DGHT…SVNS), and 236–265 (AGMT…SLDA). Residues 312–332 (ILAIFLLPIAVLWLIFSTFKW) form a helical membrane-spanning segment. Residues 333–336 (LPVY) are Lumenal-facing. A helical membrane pass occupies residues 337–357 (VGVPFAIAEFMGMQYTVVLVL). Topologically, residues 358–368 (LGHIKAQDKVS) are cytoplasmic. A helical membrane pass occupies residues 369–389 (TSNYFASIITASLIWVGYCWI). Residues 390-402 (SRFAVNTPGYAFS) are Lumenal-facing. The helical transmembrane segment at 403-423 (NLGFIIMFVGCCWTFWTAIVT) threads the bilayer. At 424–498 (DPGFVPKGQQ…NCVGAKNHRS (75 aa)) the chain is on the cytoplasmic side. The DHHC domain occupies 454–504 (NFCIVCMARKPLRSKHCRTCNRCVARFDHHCPWIWNCVGAKNHRSFLLFVL). Catalysis depends on Cys-484, which acts as the S-palmitoyl cysteine intermediate. The chain crosses the membrane as a helical span at residues 499-519 (FLLFVLFLIGGIILFIRLTIA). Residues 520-553 (YIQQNAPEYIPTPNPGLTTCDISTTLCQAGDFDP) lie on the Lumenal side of the membrane. Residues 554–574 (FLLCMALWSTLQLTWTSVLAI) traverse the membrane as a helical segment. The Cytoplasmic portion of the chain corresponds to 575-776 (SHLWQVSRQM…RYEVVSEQEV (202 aa)). The tract at residues 628-665 (GAGEEAAGPPGAEAGPEGNALLPPPGGHVHGPQCRHGD) is disordered. The segment covering 629-645 (AGEEAAGPPGAEAGPEG) has biased composition (low complexity).

Belongs to the DHHC palmitoyltransferase family. AKR/ZDHHC17 subfamily.

It localises to the early endosome membrane. The protein resides in the golgi apparatus membrane. It carries out the reaction L-cysteinyl-[protein] + hexadecanoyl-CoA = S-hexadecanoyl-L-cysteinyl-[protein] + CoA. Functionally, palmitoyltransferase specific for casein kinase 1. This chain is Palmitoyltransferase AKR1 (AKR1), found in Cryptococcus neoformans var. neoformans serotype D (strain B-3501A) (Filobasidiella neoformans).